The following is a 438-amino-acid chain: Transcriptional regulator Mb0495 (438 aa).

Residues Met1–Ser12 are compositionally biased toward polar residues. Positions Met1–Arg22 are disordered. The segment at residues Val52–Ile73 is a DNA-binding region (H-T-H motif).

It belongs to the ROK (NagC/XylR) family.

Positively regulates the expression of PE13 and PPE18. This chain is Transcriptional regulator Mb0495, found in Mycobacterium bovis (strain ATCC BAA-935 / AF2122/97).